The sequence spans 310 residues: Integrin-binding sialoprotein (310 aa).

A signal peptide spans Met-1 to Ala-16. Phosphoserine is present on residues Ser-31, Ser-62, Ser-67, Ser-75, Ser-76, Ser-98, and Ser-106. The segment at Gln-61 to Arg-284 is disordered. A compositionally biased stretch (low complexity) spans Ser-62–Asp-74. Acidic residues-rich tracts occupy residues Ser-75 to Asn-87 and Glu-96 to Ala-108. The N-linked (GlcNAc...) asparagine glycan is linked to Asn-110. Thr-144 bears the Phosphothreonine mark. The span at Asp-152 to Glu-174 shows a compositional bias: acidic residues. Ser-154 carries the phosphoserine modification. The span at Gln-175–Val-187 shows a compositional bias: polar residues. N-linked (GlcNAc...) asparagine glycans are attached at residues Asn-178 and Asn-183. A compositionally biased stretch (acidic residues) spans Asn-198–Val-208. The segment covering Thr-209–Asn-227 has biased composition (polar residues). Ser-273 carries the phosphoserine modification. Residues Arg-279–Asp-281 carry the Integrin-binding motif motif. A Phosphoserine modification is found at Ser-300. Sulfotyrosine occurs at positions 306 and 307.

In terms of assembly, monomer. Interacts with integrins; the interaction promotes cell adhesion.

It is found in the secreted. Its function is as follows. Binds tightly to hydroxyapatite. Appears to form an integral part of the mineralized matrix. Probably important to cell-matrix interaction. Promotes adhesion and migration of various cells via the alpha-V/beta-3 integrin receptor (ITGAV:ITGB3). The sequence is that of Integrin-binding sialoprotein (IBSP) from Bos taurus (Bovine).